Reading from the N-terminus, the 213-residue chain is MKPYQRQFIEFALNKQVLKFGEFTLKSGRKSPYFFNAGLFNTGRDLALLGRFYAEALVDSGIEFDLLFGPAYKGIPIATTTAVALAEHHDKDLPYCFNRKEAKDHGEGGCLVGSALQGRVMLVDDVITAGTAIRESMEIIQAHGATLAGVLISLDRQERGRGEISAIQEVERDYGCKVISIITLKDLIAYLEEKPDMAEHLAAVRAYREEFGV.

Position 26 (Lys-26) interacts with 5-phospho-alpha-D-ribose 1-diphosphate. 34–35 (FF) contributes to the orotate binding site. Residues 72–73 (YK), Arg-99, Lys-100, Lys-103, His-105, and 124–132 (DDVITAGTA) each bind 5-phospho-alpha-D-ribose 1-diphosphate. Orotate-binding residues include Thr-128 and Arg-156.

It belongs to the purine/pyrimidine phosphoribosyltransferase family. PyrE subfamily. In terms of assembly, homodimer. Mg(2+) is required as a cofactor.

It carries out the reaction orotidine 5'-phosphate + diphosphate = orotate + 5-phospho-alpha-D-ribose 1-diphosphate. It functions in the pathway pyrimidine metabolism; UMP biosynthesis via de novo pathway; UMP from orotate: step 1/2. Catalyzes the transfer of a ribosyl phosphate group from 5-phosphoribose 1-diphosphate to orotate, leading to the formation of orotidine monophosphate (OMP). The chain is Orotate phosphoribosyltransferase from Salmonella agona (strain SL483).